The chain runs to 350 residues: D-guloside 3-dehydrogenase (350 aa).

It belongs to the zinc-containing alcohol dehydrogenase family. The cofactor is Zn(2+).

The catalysed reaction is a D-guloside + NAD(+) = a 3-dehydro-D-guloside + NADH + H(+). Functionally, catalyzes the NAD(+)-dependent oxidation of the hydroxyl group at C3 of D-gulosides leading to 3-dehydro-D-gulosides. Probably functions in a metabolic pathway that transforms D-gulosides to D-glucosides. Is also able to catalyze the reverse reactions, i.e. the NADH-dependent reduction of the oxo group at C3 of 3-dehydro-D-gulosides leading to D-gulosides. In vitro, can oxidize D-gulose and methyl beta-D-guloside, and reduce methyl alpha-3-dehydro-D-guloside and methyl beta-3-dehydro-D-guloside. However, the actual specific physiological substrates for this metabolic pathway are unknown. This chain is D-guloside 3-dehydrogenase (ycjQ), found in Shigella flexneri.